A 137-amino-acid polypeptide reads, in one-letter code: NADH dehydrogenase [ubiquinone] 1 beta subcomplex subunit 7 (137 aa).

Glycine 2 carries the N-myristoyl glycine lipid modification. Residues 56–98 (RDYCAHYLIRLLKCKRDSFPNFLACKQERHDWDYCEHRDYVMR) enclose the CHCH domain. The Cx9C motif 1 signature appears at 59–69 (CAHYLIRLLKC). Disulfide bonds link cysteine 59–cysteine 90 and cysteine 69–cysteine 80. Phosphoserine is present on serine 73. The Cx9C motif 2 signature appears at 80-90 (CKQERHDWDYC). The segment at 113–137 (KRREKKAAELAKGQGPGEVDPKVAL) is disordered.

The protein belongs to the complex I NDUFB7 subunit family. As to quaternary structure, complex I is composed of 45 different subunits.

It localises to the mitochondrion inner membrane. It is found in the mitochondrion intermembrane space. Accessory subunit of the mitochondrial membrane respiratory chain NADH dehydrogenase (Complex I), that is believed not to be involved in catalysis. Complex I functions in the transfer of electrons from NADH to the respiratory chain. The immediate electron acceptor for the enzyme is believed to be ubiquinone. The sequence is that of NADH dehydrogenase [ubiquinone] 1 beta subcomplex subunit 7 (NDUFB7) from Gorilla gorilla gorilla (Western lowland gorilla).